Consider the following 420-residue polypeptide: Zinc finger protein 362 (420 aa).

Disordered stretches follow at residues 1-28 (MSRS…WPPP), 54-80 (RPPH…ESSQ), and 115-155 (VTGL…SQSR). Over residues 121 to 154 (STRTPSVSTSESSAGAGTGTGTSTPSTPTTTSQS) the composition is skewed to low complexity. Threonine 162 bears the Phosphothreonine mark. Residues 178-202 (TIQGHGLLGPPKSERGRKKIKAENP) are disordered. Lysine 198 participates in a covalent cross-link: Glycyl lysine isopeptide (Lys-Gly) (interchain with G-Cter in SUMO2). C2H2-type zinc fingers lie at residues 227–249 (YRCK…SKSH), 255–277 (HKCP…LRIH), 283–305 (YHCS…TRIH), 311–335 (YKCP…QRQH), 341–363 (YKCP…LSAH), and 371–393 (YCCS…MSKH). Phosphoserine is present on serine 404.

The protein belongs to the krueppel C2H2-type zinc-finger protein family.

Its subcellular location is the nucleus. Functionally, may be involved in transcriptional regulation. This is Zinc finger protein 362 (ZNF362) from Homo sapiens (Human).